The sequence spans 88 residues: DNA-directed RNA polymerase subunit omega (88 aa).

The protein belongs to the RNA polymerase subunit omega family. The RNAP catalytic core consists of 2 alpha, 1 beta, 1 beta' and 1 omega subunit. When a sigma factor is associated with the core the holoenzyme is formed, which can initiate transcription.

The enzyme catalyses RNA(n) + a ribonucleoside 5'-triphosphate = RNA(n+1) + diphosphate. In terms of biological role, promotes RNA polymerase assembly. Latches the N- and C-terminal regions of the beta' subunit thereby facilitating its interaction with the beta and alpha subunits. This Pseudomonas aeruginosa (strain LESB58) protein is DNA-directed RNA polymerase subunit omega.